A 256-amino-acid polypeptide reads, in one-letter code: Small ribosomal subunit protein uS2 (256 aa).

Belongs to the universal ribosomal protein uS2 family.

The sequence is that of Small ribosomal subunit protein uS2 from Streptococcus equi subsp. equi (strain 4047).